Reading from the N-terminus, the 389-residue chain is Phenylpropanoylacetyl-CoA synthase (389 aa).

C163 is an active-site residue.

This sequence belongs to the thiolase-like superfamily. Chalcone/stilbene synthases family. Homodimer. As to expression, expressed in both the leaf and rhizome, with higher expression in the rhizome.

It carries out the reaction (E)-feruloyl-CoA + malonyl-CoA + H(+) = (E)-feruloylacetyl-CoA + CO2 + CoA. The catalysed reaction is 4-coumaroyl-CoA + malonyl-CoA + H(+) = (4-coumaroyl)acetyl-CoA + CO2 + CoA. Its pathway is secondary metabolite biosynthesis; flavonoid biosynthesis. Its function is as follows. Catalyzes the formation of feruloyldiketide-CoA by condensing feruloyl-CoA and malonyl-CoA in the curcuminoid biosynthesis. Has no activity with cinnamoyl-CoA. This chain is Phenylpropanoylacetyl-CoA synthase (DCS), found in Curcuma longa (Turmeric).